The primary structure comprises 246 residues: MKVVTPKPFTFKGGDKAVLLLHGFTGNTADVRMLGRYLNERGYTCHAPQYEGHGVPPEELVHTGPEDWWKNVMDGYEYLKSEGYESIAACGLSLGGVFSLKLGYTVPIKGIVPMCAPMHIKSEEVMYQGVLSYARNYKKFEGKSPEQIEEEMKEFEKTPMNTLKALQDLIADVRNNVDMIYSPTFVVQARHDHMINTESANIIYNEVETDDKQLKWYEESGHVITLDKERDLVHQDVYEFLEKLDW.

Ser93 (nucleophile) is an active-site residue. Active-site charge relay system residues include Asp192 and His222.

The protein belongs to the lipase/esterase LIP3/BchO family. As to quaternary structure, homodimer.

It carries out the reaction a carboxylic ester + H2O = an alcohol + a carboxylate + H(+). Its function is as follows. Involved in the detoxification of xenobiotics. Shows maximal activity with C6 substrates, with gradually decreasing activity from C8 to C12 substrates. No activity for higher chain length substrates acids rather than long-chain ones. This Bacillus subtilis (strain 168) protein is Carboxylesterase (est).